We begin with the raw amino-acid sequence, 360 residues long: Transcription elongation factor, mitochondrial (360 aa).

The transit peptide at 1 to 35 directs the protein to the mitochondrion; the sequence is MSGSVLFTAGERWRCFLTPSRSSLYWALHNFCCRK.

Belongs to the TEFM family. Interacts with POLRMT.

The protein localises to the mitochondrion matrix. It localises to the mitochondrion nucleoid. In terms of biological role, transcription elongation factor which increases mitochondrial RNA polymerase processivity. Regulates transcription of the mitochondrial genome, including genes important for the oxidative phosphorylation machinery. The sequence is that of Transcription elongation factor, mitochondrial (TEFM) from Homo sapiens (Human).